Consider the following 99-residue polypeptide: Seminal vesicle secretory protein 6 (99 aa).

The signal sequence occupies residues 1-21 (MSPTSFFLLTMLLVLVTETAA).

The protein belongs to the SVP2/SVP5/SVP6 family. Testis.

The protein localises to the secreted. It is found in the extracellular space. The protein is Seminal vesicle secretory protein 6 (Svs6) of Mus musculus (Mouse).